The chain runs to 153 residues: Putative transcription factor YdeB (153 aa).

Belongs to the CarD family.

This is Putative transcription factor YdeB (ydeB) from Bacillus subtilis (strain 168).